Here is a 59-residue protein sequence, read N- to C-terminus: MKLHMLNMLNCLLLTVCDGHLHMHGNGATQVFKPRLVLKCPNAAQLIQPGKLQRQLLLP.

The signal sequence occupies residues 1-19; sequence MKLHMLNMLNCLLLTVCDG.

As to expression, salivary glands.

The protein resides in the secreted. Its function is as follows. Anti-inflammatory peptide that may facilitate successful blood feeding of ticks and may lead to immunotolerance in its host. Inhibits the secretion of inflammatory factors in rat splenocytes, such as tumor necrosis factor-alpha (TNF), interleukin-1, interleukin-8 (CXCL8) and interferon-gamma (IFNG). In addition, shows strong free radical scavenging and antioxidant activities in vitro. In vivo, inhibits adjuvant-induced paw inflammation in mouse models. In Amblyomma variegatum (Tropical bont tick), this protein is Anti-inflammatory peptide amregulin.